Reading from the N-terminus, the 378-residue chain is Queuine tRNA-ribosyltransferase (378 aa).

The Proton acceptor role is filled by D89. Substrate-binding positions include 89–93 (DSGGF), D143, Q194, and G221. An RNA binding region spans residues 252–258 (GVGTPAN). D271 (nucleophile) is an active-site residue. The RNA binding; important for wobble base 34 recognition stretch occupies residues 276-280 (ARNGR). Positions 309, 311, 314, and 340 each coordinate Zn(2+).

It belongs to the queuine tRNA-ribosyltransferase family. In terms of assembly, homodimer. Within each dimer, one monomer is responsible for RNA recognition and catalysis, while the other monomer binds to the replacement base PreQ1. Zn(2+) is required as a cofactor.

The catalysed reaction is 7-aminomethyl-7-carbaguanine + guanosine(34) in tRNA = 7-aminomethyl-7-carbaguanosine(34) in tRNA + guanine. It participates in tRNA modification; tRNA-queuosine biosynthesis. Catalyzes the base-exchange of a guanine (G) residue with the queuine precursor 7-aminomethyl-7-deazaguanine (PreQ1) at position 34 (anticodon wobble position) in tRNAs with GU(N) anticodons (tRNA-Asp, -Asn, -His and -Tyr). Catalysis occurs through a double-displacement mechanism. The nucleophile active site attacks the C1' of nucleotide 34 to detach the guanine base from the RNA, forming a covalent enzyme-RNA intermediate. The proton acceptor active site deprotonates the incoming PreQ1, allowing a nucleophilic attack on the C1' of the ribose to form the product. After dissociation, two additional enzymatic reactions on the tRNA convert PreQ1 to queuine (Q), resulting in the hypermodified nucleoside queuosine (7-(((4,5-cis-dihydroxy-2-cyclopenten-1-yl)amino)methyl)-7-deazaguanosine). This Lachnoclostridium phytofermentans (strain ATCC 700394 / DSM 18823 / ISDg) (Clostridium phytofermentans) protein is Queuine tRNA-ribosyltransferase.